A 144-amino-acid chain; its full sequence is Prefoldin subunit alpha (144 aa).

Belongs to the prefoldin subunit alpha family. In terms of assembly, heterohexamer of two alpha and four beta subunits.

It is found in the cytoplasm. Molecular chaperone capable of stabilizing a range of proteins. Seems to fulfill an ATP-independent, HSP70-like function in archaeal de novo protein folding. In Methanococcus maripaludis (strain DSM 14266 / JCM 13030 / NBRC 101832 / S2 / LL), this protein is Prefoldin subunit alpha.